Reading from the N-terminus, the 852-residue chain is Disrupted in schizophrenia 1 homolog (852 aa).

Disordered stretches follow at residues 1-86, 236-264, and 280-320; these read MQGG…GLDP, EAEP…PRHL, and QVTR…QGGG. Residues 1–294 form an interaction with MAP1A region; that stretch reads MQGGGPRGAP…SSRQSECGTV (294 aa). Over residues 65–79 the composition is skewed to polar residues; that stretch reads AGLTGQQSQHSQSKA. Over residues 253 to 263 the composition is skewed to basic and acidic residues; it reads SSDRPHGDPRH. A compositionally biased stretch (low complexity) spans 288 to 311; the sequence is QSECGTVSSSSSDTGFSSQDASSA. Residues 295–693 form an interaction with TRAF3IP1 region; it reads SSSSSDTGFS…LGRVWKADLE (399 aa). Coiled-coil stretches lie at residues 367–397 and 449–496; these read EDGD…ALPS and ITRR…LLRW. Residues 437–594 are required for localization to punctate cytoplasmic foci; the sequence is LRTTAQDSLP…LLEAKMLALS (158 aa). The necessary and sufficient for interaction with PCNT and localization at the centrosome stretch occupies residues 443-852; the sequence is DSLPASITRR…PTAGAQETEA (410 aa). The interval 595 to 852 is interaction with ATF4 and ATF5; sequence GSCFSTAKEL…PTAGAQETEA (258 aa). Disordered regions lie at residues 706-746 and 833-852; these read EAGS…KSPL and KEAG…ETEA. Positions 728 to 852 are interaction with NDEL1 and PAFAH1B1; it reads TAALAVPRTP…PTAGAQETEA (125 aa). Positions 728-852 are interaction with PAFAH1B1; that stretch reads TAALAVPRTP…PTAGAQETEA (125 aa). An interaction with NDEL1 region spans residues 802–835; sequence SHDEALFQSLQGELQTVKETLQAMILQLQPTKEA.

In terms of assembly, interacts with NDEL1. Interacts with CCDC88A (via C-terminus); the interaction is direct. Interacts with GSK3B. Interacts with tubulin alpha, ACTN2, ANKHD1, ATF4, ATF5, CEP63, EIF3S3, MAP1A, NDEL1, PAFAH1B1, RANBP9, SPTBN4, SYNE1 and TRAF3IP1. Interaction with microtubules may be mediated in part by TRAF3IP1. Interacts (via C-terminal) with PCNT. Interacts with CHCHD6. Interacts with CCDC141. Interacts with FBXW7, the substrate-recognition component of a SCF (SKP1-CUL1-F-box protein) E3 ubiquitin-protein ligase complex; the interaction targets DISC1 for proteasomal degradation. Interacts with ZNF365. Interacts with ATF4; inhibiting ATF4 transcription factor activity by disrupting ATF4 dimerization and DNA-binding. Interacts with PDE4B. Post-translationally, ubiquitinated. Ubiquitination with 'Lys-48'-linked polyubiquitin chains leads to its proteasomal degradation. Expressed in granule cell precursors within the dentate migratory stream during the first week of postnatal life and in differentiated granule cells of the hippocampus (at protein level). Detected in heart, brain, kidney, and testis. Expressed in dentate gyrus, hippocampus and in the olfactory bulb.

The protein resides in the cytoplasm. It is found in the cytoskeleton. It localises to the mitochondrion. The protein localises to the microtubule organizing center. Its subcellular location is the centrosome. The protein resides in the postsynaptic density. Involved in the regulation of multiple aspects of embryonic and adult neurogenesis. Required for neural progenitor proliferation in the ventrical/subventrical zone during embryonic brain development and in the adult dentate gyrus of the hippocampus. Participates in the Wnt-mediated neural progenitor proliferation as a positive regulator by modulating GSK3B activity and CTNNB1 abundance. Plays a role as a modulator of the AKT-mTOR signaling pathway controlling the tempo of the process of newborn neurons integration during adult neurogenesis, including neuron positioning, dendritic development and synapse formation. Inhibits the activation of AKT-mTOR signaling upon interaction with CCDC88A. Regulates the migration of early-born granule cell precursors toward the dentate gyrus during the hippocampal development. Inhibits ATF4 transcription factor activity in neurons by disrupting ATF4 dimerization and DNA-binding. Plays a role, together with PCNT, in the microtubule network formation. The sequence is that of Disrupted in schizophrenia 1 homolog from Mus musculus (Mouse).